Here is a 246-residue protein sequence, read N- to C-terminus: UDP-N-acetyl-D-mannosaminuronic acid transferase (246 aa).

This sequence belongs to the glycosyltransferase 26 family.

It carries out the reaction UDP-N-acetyl-alpha-D-mannosaminouronate + N-acetyl-alpha-D-glucosaminyl-di-trans,octa-cis-undecaprenyl diphosphate = beta-D-ManNAcA-(1-&gt;4)-alpha-D-GlcNAc-di-trans,octa-cis-undecaprenyl diphosphate + UDP + H(+). Its pathway is bacterial outer membrane biogenesis; enterobacterial common antigen biosynthesis. Functionally, catalyzes the synthesis of Und-PP-GlcNAc-ManNAcA (Lipid II), the second lipid-linked intermediate involved in enterobacterial common antigen (ECA) synthesis. This Salmonella arizonae (strain ATCC BAA-731 / CDC346-86 / RSK2980) protein is UDP-N-acetyl-D-mannosaminuronic acid transferase.